The chain runs to 144 residues: uncharacterized protein (144 aa).

This is an uncharacterized protein from Archaeoglobus fulgidus (strain ATCC 49558 / DSM 4304 / JCM 9628 / NBRC 100126 / VC-16).